Reading from the N-terminus, the 594-residue chain is Potassium-transporting ATPase potassium-binding subunit (594 aa).

The next 10 helical transmembrane spans lie at 3–23 (ADFL…APLL), 67–87 (AVAM…LQRL), 136–156 (ALTV…IALV), 179–199 (LYVL…QGVV), 287–307 (LEML…GEMV), 314–334 (VAIL…AAYF), 415–435 (GLYG…LMIG), 453–473 (VALV…VAVL), 519–539 (VLLG…ILAL), and 562–582 (LFVA…YVPA).

This sequence belongs to the KdpA family. In terms of assembly, the system is composed of three essential subunits: KdpA, KdpB and KdpC.

It is found in the cell inner membrane. Part of the high-affinity ATP-driven potassium transport (or Kdp) system, which catalyzes the hydrolysis of ATP coupled with the electrogenic transport of potassium into the cytoplasm. This subunit binds the periplasmic potassium ions and delivers the ions to the membrane domain of KdpB through an intramembrane tunnel. The protein is Potassium-transporting ATPase potassium-binding subunit of Bordetella bronchiseptica (strain ATCC BAA-588 / NCTC 13252 / RB50) (Alcaligenes bronchisepticus).